A 519-amino-acid polypeptide reads, in one-letter code: MKLCFFLLIFIRSFLLFKIKLVRTSEKKWRMGSRSHGDVKHPKSLPSLPVIGSLLHLGKKLPPHILFCNLQKKYGSLYSFMMGSHYVVVVNNHEDAREVLLKKGKTFGGRPRTVTTDILTRDGKDIAFADYSPTWKFHRKMVHSALCMFGEGTVAIEQIISREAASLCQTLTSFQRIPLDMAPELIRAVTNVVCSLCFNTRYKRGDAEFETMLKYSKGIVDTVAKDSLVDIFPWLQIFPNKDLDILRQSVAARDQLLQKKINEHKDAFCGETVKDLVDALLKAKLNMENNNSNVSQDVGLTEDHILMTVGDIFGAGVETTSTVLKWAVAYLLHYPEVQKKIQEELDVKVGFGRYPLLSDRKILHYTEAAISEVLRIRPVSPLLIPHVALKESSIGEYTIPKEARVVINLWSLHHDEKEWVNPHLFSPDRFLDENGNRVYSPSPSFLPFGAGIRVCLGEALAKMEVFLFLSWILQRFTLEVPEGDPLPDLEGKFGVVIQVKPFKVIAKLREVWKNIEIVT.

Cys455 contacts heme.

It belongs to the cytochrome P450 family. Requires heme as cofactor.

The protein localises to the membrane. The catalysed reaction is a C21-steroid + reduced [NADPH--hemoprotein reductase] + O2 = a 17alpha-hydroxy-C21-steroid + oxidized [NADPH--hemoprotein reductase] + H2O + H(+). It catalyses the reaction 17alpha-hydroxyprogesterone + reduced [NADPH--hemoprotein reductase] + O2 = androst-4-ene-3,17-dione + acetate + oxidized [NADPH--hemoprotein reductase] + H2O + 2 H(+). The enzyme catalyses 17alpha-hydroxypregnenolone + reduced [NADPH--hemoprotein reductase] + O2 = 3beta-hydroxyandrost-5-en-17-one + acetate + oxidized [NADPH--hemoprotein reductase] + H2O + 2 H(+). The protein operates within lipid metabolism; steroid biosynthesis. Conversion of pregnenolone and progesterone to their 17-alpha-hydroxylated products and subsequently to dehydroepiandrosterone (DHEA) and androstenedione. Catalyzes both the 17-alpha-hydroxylation and the 17,20-lyase reaction. The chain is Steroid 17-alpha-hydroxylase/17,20 lyase (CYP17A1) from Rana dybowskii (Dybovsky's frog).